Reading from the N-terminus, the 579-residue chain is Matrix metalloproteinase-C (579 aa).

A signal peptide spans 1 to 17 (MRLIYVIAILLVSTCQA). A propeptide spans 18 to 129 (GFFSSLVSRF…SRCGVTDAPL (112 aa)) (activation peptide). The interval 32 to 51 (NSSPSSSSSSSSFSNSRKPS) is disordered. The span at 33–50 (SSPSSSSSSSSFSNSRKP) shows a compositional bias: low complexity. Residues 120–127 (SRCGVTDA) carry the Cysteine switch motif. C122, H200, D202, H215, and H225 together coordinate Zn(2+). The N-linked (GlcNAc...) asparagine glycan is linked to N231. H254 is a Zn(2+) binding site. The active site involves E255. Zn(2+) is bound by residues H258 and H264. The disordered stretch occupies residues 307-394 (SGRSSSGSDF…SSSGSSGGGC (88 aa)). Positions 315 to 324 (DFGGSSGGGS) are enriched in gly residues. A compositionally biased stretch (low complexity) spans 325–341 (RTTARPTTTTRSWFGRF). Gly residues predominate over residues 373 to 394 (WGSGSGSSGRGGSSSGSSGGGC). Hemopexin repeat units follow at residues 395–437 (PSHI…FPSA) and 438–490 (PTPV…LGFS).

It belongs to the peptidase M10A family. It depends on Zn(2+) as a cofactor.

It is found in the secreted. The protein resides in the extracellular space. The protein localises to the extracellular matrix. With respect to regulation, inhibited by human TIMP1 and TIMP2 and the broad MMP inhibitors BB94 (Batimastat) and CT543. Metalloproteinase. This chain is Matrix metalloproteinase-C, found in Caenorhabditis elegans.